Here is a 764-residue protein sequence, read N- to C-terminus: Semaphorin-3D (764 aa).

Residues 1–41 (MKTAGEPDRRRQRRQVRTGRFSCAWWSTSVMLFFSLPEGNC) form the signal peptide. One can recognise a Sema domain in the interval 48–535 (RVKLGYKDLI…GSDGLVQVSL (488 aa)). A disulfide bond links cysteine 121 and cysteine 132. Asparagine 143 carries N-linked (GlcNAc...) asparagine glycosylation. Cystine bridges form between cysteine 150-cysteine 159, cysteine 290-cysteine 402, and cysteine 314-cysteine 362. N-linked (GlcNAc...) asparagine glycosylation occurs at asparagine 490. The cysteines at positions 538 and 556 are disulfide-linked. The N-linked (GlcNAc...) asparagine glycan is linked to asparagine 610. Residues 661 to 740 (GDAGSYFCTS…EYCETMWHRE (80 aa)) enclose the Ig-like C2-type domain. Cysteine 668 and cysteine 733 are disulfide-bonded. The segment at 743–764 (QKQKGKWKHVQELRKSRNRRHH) is disordered.

The protein belongs to the semaphorin family.

The protein localises to the secreted. May play a role in the guidance of several axon pathways. This is Semaphorin-3D (sema3d) from Danio rerio (Zebrafish).